We begin with the raw amino-acid sequence, 145 residues long: Bacilliredoxin SERP1006 (145 aa).

This sequence belongs to the bacilliredoxin family.

The protein is Bacilliredoxin SERP1006 of Staphylococcus epidermidis (strain ATCC 35984 / DSM 28319 / BCRC 17069 / CCUG 31568 / BM 3577 / RP62A).